The primary structure comprises 508 residues: UDP-N-acetylmuramoyl-L-alanyl-D-glutamate--L-lysine ligase (508 aa).

S47 lines the UDP-N-acetyl-alpha-D-muramoyl-L-alanyl-D-glutamate pocket. 124–130 (GTKGKTT) lines the ATP pocket. UDP-N-acetyl-alpha-D-muramoyl-L-alanyl-D-glutamate contacts are provided by residues 168 to 169 (TT), S195, and R203. The residue at position 237 (K237) is an N6-carboxylysine. The L-lysine recognition motif signature appears at 425–428 (DDPA).

Belongs to the MurCDEF family. MurE subfamily. Carboxylation is probably crucial for Mg(2+) binding and, consequently, for the gamma-phosphate positioning of ATP.

It localises to the cytoplasm. The enzyme catalyses UDP-N-acetyl-alpha-D-muramoyl-L-alanyl-D-glutamate + L-lysine + ATP = UDP-N-acetyl-alpha-D-muramoyl-L-alanyl-gamma-D-glutamyl-L-lysine + ADP + phosphate + H(+). It functions in the pathway cell wall biogenesis; peptidoglycan biosynthesis. Catalyzes the addition of L-lysine to the nucleotide precursor UDP-N-acetylmuramoyl-L-alanyl-D-glutamate (UMAG) in the biosynthesis of bacterial cell-wall peptidoglycan. In Enterococcus faecalis (strain ATCC 700802 / V583), this protein is UDP-N-acetylmuramoyl-L-alanyl-D-glutamate--L-lysine ligase.